The sequence spans 160 residues: S-ribosylhomocysteine lyase (160 aa).

Fe cation is bound by residues His-57, His-61, and Cys-127.

This sequence belongs to the LuxS family. As to quaternary structure, homodimer. The cofactor is Fe cation.

The enzyme catalyses S-(5-deoxy-D-ribos-5-yl)-L-homocysteine = (S)-4,5-dihydroxypentane-2,3-dione + L-homocysteine. In terms of biological role, involved in the synthesis of autoinducer 2 (AI-2) which is secreted by bacteria and is used to communicate both the cell density and the metabolic potential of the environment. The regulation of gene expression in response to changes in cell density is called quorum sensing. Catalyzes the transformation of S-ribosylhomocysteine (RHC) to homocysteine (HC) and 4,5-dihydroxy-2,3-pentadione (DPD). This is S-ribosylhomocysteine lyase from Streptococcus gordonii (strain Challis / ATCC 35105 / BCRC 15272 / CH1 / DL1 / V288).